A 310-amino-acid chain; its full sequence is uncharacterized protein (310 aa).

The tract at residues 1–70 is disordered; sequence MAGNSQRRGA…ARGRTDETET (70 aa). Residues 49–62 show a composition bias toward basic residues; that stretch reads AAKRAKAQQRRPAR. Gly-262, Val-282, and Leu-291 together coordinate S-adenosyl-L-methionine.

The protein belongs to the class IV-like SAM-binding methyltransferase superfamily. RNA methyltransferase TrmH family.

This is an uncharacterized protein from Mycobacterium marinum (strain ATCC BAA-535 / M).